The following is a 524-amino-acid chain: GMP synthase [glutamine-hydrolyzing] (524 aa).

The region spanning 5–195 (KVIVIDFGGQ…VRGVCGCAGT (191 aa)) is the Glutamine amidotransferase type-1 domain. Catalysis depends on C82, which acts as the Nucleophile. Active-site residues include H169 and E171. The GMPS ATP-PPase domain maps to 196-389 (WKMDAFVENT…LGIPEHLVFR (194 aa)). 223–229 (SGGVDSS) provides a ligand contact to ATP.

Homodimer.

The catalysed reaction is XMP + L-glutamine + ATP + H2O = GMP + L-glutamate + AMP + diphosphate + 2 H(+). It participates in purine metabolism; GMP biosynthesis; GMP from XMP (L-Gln route): step 1/1. In terms of biological role, catalyzes the synthesis of GMP from XMP. This chain is GMP synthase [glutamine-hydrolyzing], found in Lachnospira eligens (strain ATCC 27750 / DSM 3376 / VPI C15-48 / C15-B4) (Eubacterium eligens).